An 809-amino-acid polypeptide reads, in one-letter code: Sodium/hydrogen exchanger 2 (809 aa).

Helical transmembrane passes span Ile107 to Gly127, Thr138 to Pro158, Ile169 to Phe189, Leu209 to Ile229, Ile237 to Phe257, Phe278 to Phe298, and Val308 to Phe328. Residue Asn350 is glycosylated (N-linked (GlcNAc...) asparagine). A run of 4 helical transmembrane segments spans residues Tyr361–Ser381, Ala392–Leu412, Phe430–Pro450, and Leu459–Ile479. 2 stretches are compositionally biased toward basic and acidic residues: residues Ile648–Ala660 and Arg793–Pro809. Disordered stretches follow at residues Ile648–Ala700 and Glu734–Pro809.

This sequence belongs to the monovalent cation:proton antiporter 1 (CPA1) transporter (TC 2.A.36) family. In terms of assembly, interacts with CHP1 and CHP2. As to expression, high levels in intestine and kidney. Strongly expressed in gastric epithelial cells, with particularly high expression levels in mucous cells.

It localises to the apical cell membrane. The enzyme catalyses Na(+)(in) + H(+)(out) = Na(+)(out) + H(+)(in). Its function is as follows. Plasma membrane Na(+)/H(+) antiporter. Mediates the electroneutral exchange of intracellular H(+) ions for extracellular Na(+). Major apical Na(+)/H(+) exchanger in the base of the colonic crypt. Controls in the colonic crypt intracellular pH (pHi) to direct colonic epithelial cell differentiation into the absorptive enterocyte lineage at the expense of the secretory lineage. The polypeptide is Sodium/hydrogen exchanger 2 (SLC9A2) (Oryctolagus cuniculus (Rabbit)).